The following is a 136-amino-acid chain: ATP synthase epsilon chain 2 (136 aa).

The protein belongs to the ATPase epsilon chain family. As to quaternary structure, F-type ATPases have 2 components, CF(1) - the catalytic core - and CF(0) - the membrane proton channel. CF(1) has five subunits: alpha(3), beta(3), gamma(1), delta(1), epsilon(1). CF(0) has three main subunits: a, b and c.

It is found in the cell inner membrane. In terms of biological role, produces ATP from ADP in the presence of a proton gradient across the membrane. This Nitrobacter hamburgensis (strain DSM 10229 / NCIMB 13809 / X14) protein is ATP synthase epsilon chain 2.